A 256-amino-acid chain; its full sequence is Acetyl-coenzyme A carboxylase carboxyl transferase subunit alpha (256 aa).

One can recognise a CoA carboxyltransferase C-terminal domain in the interval 1–236; the sequence is MTDVARILKE…RSHLIDEITQ (236 aa).

This sequence belongs to the AccA family. In terms of assembly, acetyl-CoA carboxylase is a heterohexamer composed of biotin carboxyl carrier protein (AccB), biotin carboxylase (AccC) and two subunits each of ACCase subunit alpha (AccA) and ACCase subunit beta (AccD).

The protein localises to the cytoplasm. It carries out the reaction N(6)-carboxybiotinyl-L-lysyl-[protein] + acetyl-CoA = N(6)-biotinyl-L-lysyl-[protein] + malonyl-CoA. It participates in lipid metabolism; malonyl-CoA biosynthesis; malonyl-CoA from acetyl-CoA: step 1/1. Functionally, component of the acetyl coenzyme A carboxylase (ACC) complex. First, biotin carboxylase catalyzes the carboxylation of biotin on its carrier protein (BCCP) and then the CO(2) group is transferred by the carboxyltransferase to acetyl-CoA to form malonyl-CoA. The chain is Acetyl-coenzyme A carboxylase carboxyl transferase subunit alpha from Streptococcus equi subsp. zooepidemicus (strain MGCS10565).